Consider the following 91-residue polypeptide: Large ribosomal subunit protein eL31 (91 aa).

Belongs to the eukaryotic ribosomal protein eL31 family.

This is Large ribosomal subunit protein eL31 from Pyrobaculum neutrophilum (strain DSM 2338 / JCM 9278 / NBRC 100436 / V24Sta) (Thermoproteus neutrophilus).